A 341-amino-acid chain; its full sequence is Hydrogenase expression/formation protein HupE (341 aa).

This sequence belongs to the HypE family.

May be involved in the maturation of the NifE hydrogenase. This is Hydrogenase expression/formation protein HupE (hupE) from Azotobacter chroococcum mcd 1.